A 282-amino-acid chain; its full sequence is Bis(5'-nucleosyl)-tetraphosphatase, symmetrical (282 aa).

The protein belongs to the Ap4A hydrolase family.

It carries out the reaction P(1),P(4)-bis(5'-adenosyl) tetraphosphate + H2O = 2 ADP + 2 H(+). In terms of biological role, hydrolyzes diadenosine 5',5'''-P1,P4-tetraphosphate to yield ADP. This chain is Bis(5'-nucleosyl)-tetraphosphatase, symmetrical, found in Salmonella paratyphi C (strain RKS4594).